A 304-amino-acid polypeptide reads, in one-letter code: Acetyl-coenzyme A carboxylase carboxyl transferase subunit beta (304 aa).

The 270-residue stretch at 25-294 folds into the CoA carboxyltransferase N-terminal domain; the sequence is LWIKCPETGE…EAARRESGSQ (270 aa).

This sequence belongs to the AccD/PCCB family. As to quaternary structure, acetyl-CoA carboxylase is a heterohexamer composed of biotin carboxyl carrier protein (AccB), biotin carboxylase (AccC) and two subunits each of ACCase subunit alpha (AccA) and ACCase subunit beta (AccD).

The protein resides in the cytoplasm. It carries out the reaction N(6)-carboxybiotinyl-L-lysyl-[protein] + acetyl-CoA = N(6)-biotinyl-L-lysyl-[protein] + malonyl-CoA. The protein operates within lipid metabolism; malonyl-CoA biosynthesis; malonyl-CoA from acetyl-CoA: step 1/1. Its function is as follows. Component of the acetyl coenzyme A carboxylase (ACC) complex. Biotin carboxylase (BC) catalyzes the carboxylation of biotin on its carrier protein (BCCP) and then the CO(2) group is transferred by the transcarboxylase to acetyl-CoA to form malonyl-CoA. In Sinorhizobium fredii (strain NBRC 101917 / NGR234), this protein is Acetyl-coenzyme A carboxylase carboxyl transferase subunit beta.